The chain runs to 552 residues: Urocanate hydratase (552 aa).

Residues 48 to 49, Q126, 172 to 174, E192, R197, 238 to 239, 259 to 263, 269 to 270, and Y318 each bind NAD(+); these read GG, GMG, NA, QTSAH, and YV. C406 is an active-site residue. G488 lines the NAD(+) pocket.

It belongs to the urocanase family. The cofactor is NAD(+).

The protein resides in the cytoplasm. The enzyme catalyses 4-imidazolone-5-propanoate = trans-urocanate + H2O. Its pathway is amino-acid degradation; L-histidine degradation into L-glutamate; N-formimidoyl-L-glutamate from L-histidine: step 2/3. Functionally, catalyzes the conversion of urocanate to 4-imidazolone-5-propionate. This is Urocanate hydratase from Herpetosiphon aurantiacus (strain ATCC 23779 / DSM 785 / 114-95).